The chain runs to 118 residues: T cell receptor gamma variable 5 (118 aa).

The first 17 residues, 1–17, serve as a signal peptide directing secretion; that stretch reads MRWALLVLLAFLSPASQ. Positions 18 to 118 constitute an Ig-like domain; the sequence is KSSNLEGGTK…GVYYCATWDR (101 aa). Residues cysteine 41 and cysteine 113 are joined by a disulfide bond. Asparagine 106 carries an N-linked (GlcNAc...) asparagine glycan.

Gamma-delta TR is a heterodimer composed of a gamma and delta chain; disulfide-linked. The gamma-delta TR is associated with the transmembrane signaling CD3 coreceptor proteins following the stoichiometry: a single gamma-delta TR heterodimer associates with one CD3D-CD3E heterodimer, one CD3G-CD3E heterodimer and one CD247 homodimer forming a stable octameric structure. Upon activation, gamma-delta TR complex associates with FCER1G to initiate intracellular signaling.

The protein resides in the cell membrane. In terms of biological role, v region of the variable domain of T cell receptor (TR) gamma chain that participates in the antigen recognition. Gamma-delta TRs recognize a variety of self and foreign non-peptide antigens frequently expressed at the epithelial boundaries between the host and external environment, including endogenous lipids presented by MH-like protein CD1D and phosphoantigens presented by butyrophilin-like molecule BTN3A1. Upon antigen recognition induces rapid, innate-like immune responses involved in pathogen clearance and tissue repair. Binding of gamma-delta TR complex to antigen triggers phosphorylation of immunoreceptor tyrosine-based activation motifs (ITAMs) in the CD3 chains by the LCK and FYN kinases, allowing the recruitment, phosphorylation, and activation of ZAP70 that facilitates phosphorylation of the scaffolding proteins LCP2 and LAT. This lead to the formation of a supramolecular signalosome that recruits the phospholipase PLCG1, resulting in calcium mobilization and ERK activation, ultimately leading to T cell expansion and differentiation into effector cells. Gamma-delta TRs are produced through somatic rearrangement of a limited repertoire of variable (V), diversity (D), and joining (J) genes. The potential diversity of gamma-delta TRs is conferred by the unique ability to rearrange (D) genes in tandem and to utilize all three reading frames. The combinatorial diversity is considerably increased by the sequence exonuclease trimming and random nucleotide (N) region additions which occur during the V-(D)-J rearrangements. This chain is T cell receptor gamma variable 5, found in Homo sapiens (Human).